The sequence spans 376 residues: uncharacterized protein (376 aa).

Phosphoserine is present on serine 59. Positions 139–367 (VAIEITVQRQ…CLIEHHNAIF (229 aa)) constitute a Rho-GAP domain. Positions 307–338 (RPSRSPKKSNDFETATPWDLLSDEGEGPDASS) are disordered.

This is an uncharacterized protein from Arabidopsis thaliana (Mouse-ear cress).